We begin with the raw amino-acid sequence, 325 residues long: Elongation factor Ts, mitochondrial (325 aa).

Residues 1-45 (MSLLRSLRVFLVARTGSYPAGSLLRQSPQPRHTFYAGPRLSASAS) constitute a mitochondrion transit peptide. Lys-76, Lys-133, and Lys-192 each carry N6-succinyllysine. Ser-270 is modified (phosphoserine). At Thr-324 the chain carries Phosphothreonine.

It belongs to the EF-Ts family. As to expression, expressed in all tissues, with the highest levels of expression in skeletal muscle, liver and kidney.

The protein resides in the mitochondrion. Functionally, associates with the EF-Tu.GDP complex and induces the exchange of GDP to GTP. It remains bound to the aminoacyl-tRNA.EF-Tu.GTP complex up to the GTP hydrolysis stage on the ribosome. This is Elongation factor Ts, mitochondrial from Homo sapiens (Human).